The chain runs to 287 residues: NH(3)-dependent NAD(+) synthetase (287 aa).

Residue 53–60 (GISGGQDS) coordinates ATP. Residue D59 participates in Mg(2+) binding. R146 serves as a coordination point for deamido-NAD(+). Residue T166 participates in ATP binding. A Mg(2+)-binding site is contributed by E171. Deamido-NAD(+) is bound by residues K179 and D186. Residues K195 and T217 each contribute to the ATP site. Position 266–267 (266–267 (HK)) interacts with deamido-NAD(+).

This sequence belongs to the NAD synthetase family. In terms of assembly, homodimer.

The enzyme catalyses deamido-NAD(+) + NH4(+) + ATP = AMP + diphosphate + NAD(+) + H(+). It participates in cofactor biosynthesis; NAD(+) biosynthesis; NAD(+) from deamido-NAD(+) (ammonia route): step 1/1. Its function is as follows. Catalyzes the ATP-dependent amidation of deamido-NAD to form NAD. Uses ammonia as a nitrogen source. This Deinococcus radiodurans (strain ATCC 13939 / DSM 20539 / JCM 16871 / CCUG 27074 / LMG 4051 / NBRC 15346 / NCIMB 9279 / VKM B-1422 / R1) protein is NH(3)-dependent NAD(+) synthetase.